The primary structure comprises 398 residues: Serpin-ZX (398 aa).

An RCL region spans residues 342–366 (GTEAAARTARVVTLRSLPVEPVKVD).

This sequence belongs to the serpin family. In terms of tissue distribution, expressed in roots, coleoptiles, shoots, leaves, embryo and endosperm.

In terms of biological role, inhibits chymotrypsin, cathepsin G and trypsin in vitro. This Hordeum vulgare (Barley) protein is Serpin-ZX (PAZX).